The primary structure comprises 174 residues: Large ribosomal subunit protein uL10 (174 aa).

The protein belongs to the universal ribosomal protein uL10 family. Part of the ribosomal stalk of the 50S ribosomal subunit. The N-terminus interacts with L11 and the large rRNA to form the base of the stalk. The C-terminus forms an elongated spine to which L12 dimers bind in a sequential fashion forming a multimeric L10(L12)X complex.

In terms of biological role, forms part of the ribosomal stalk, playing a central role in the interaction of the ribosome with GTP-bound translation factors. This chain is Large ribosomal subunit protein uL10, found in Geobacter sulfurreducens (strain ATCC 51573 / DSM 12127 / PCA).